A 274-amino-acid chain; its full sequence is Speedy protein C (274 aa).

Positions 37-169 are speedy/Ringo box; Required for CDK-binding; the sequence is HQEVQAFLSL…FHWAWTRDRR (133 aa).

The protein belongs to the Speedy/Ringo family. As to quaternary structure, interacts with CDK1 and CDK2. Interacts with AURKB. In terms of tissue distribution, expressed in a variety of tissues including bone marrow, kidney, small intestine, liver, placenta and testis.

The protein localises to the cytoplasm. In terms of biological role, promotes progression through the cell cycle via binding and activation of CDK1 and CDK2. Involved in the spindle-assembly checkpoint. Required for recruitment of MAD2L1, BUBR1 and BUB1 to kinetochores. Required for the correct localization of the active form of Aurora B in prometaphase. The polypeptide is Speedy protein C (Homo sapiens (Human)).